A 338-amino-acid chain; its full sequence is Sesquiterpene synthase 1 (338 aa).

Residues Asp93, Asn228, Ser232, and Glu236 each coordinate Mg(2+). The short motif at 93-97 (DNISD) is the DDXXD motif element. Positions 228–236 (NDIFSYNVE) match the NSE/DTE motif motif. Residues Arg316 and Tyr317 each contribute to the (2E,6E)-farnesyl diphosphate site.

The protein belongs to the terpene synthase family. It depends on Mg(2+) as a cofactor.

The catalysed reaction is (2E,6E)-farnesyl diphosphate = alpha-copaene + diphosphate. The enzyme catalyses (2E,6E)-farnesyl diphosphate = beta-copaene + diphosphate. It carries out the reaction (2E,6E)-farnesyl diphosphate = alpha-muurolene + diphosphate. It catalyses the reaction (2E,6E)-farnesyl diphosphate = gamma-muurolene + diphosphate. The catalysed reaction is (2E,6E)-farnesyl diphosphate = delta-cadinene + diphosphate. Its function is as follows. Terpene cyclase that catalyzes the cyclization of farnesyl diphosphate (FPP) to various sesquiterpenes, including alpha-copaene, beta-copaene, beta-elemene, alpha-muurolene, gamma-muurolene and delta-cadinene. This chain is Sesquiterpene synthase 1, found in Postia placenta (strain ATCC 44394 / Madison 698-R) (Brown rot fungus).